The following is a 293-amino-acid chain: MRLDAFAPAKVNLFLHVGGPDAAGYHPISSLMLFADVGDRVSLQAADAPSFEATGWFGAEVPVDDGNLVVRAEMALRARLGGPTPPFRLILDKALPIAAGLGGGSSDAGAALRLLREALAPDLSDADLEAVAGGLGADGAACLWGAPVMARGRGERLSPAPALPALHAVLVNPLVPSPTGAVYRAYDAAVAPEGEAPPPMLDGLESIEEVCAWLAGFTRNDLQAPAVALEPRIGQVLDLLADEPETLLARMSGSGATCFALCAGDIEAEGLAERIEQMRPDWWVKRCRLGGPF.

Lysine 10 is an active-site residue. 96-106 serves as a coordination point for ATP; sequence PIAAGLGGGSS. Residue aspartate 138 is part of the active site.

It belongs to the GHMP kinase family. IspE subfamily.

It catalyses the reaction 4-CDP-2-C-methyl-D-erythritol + ATP = 4-CDP-2-C-methyl-D-erythritol 2-phosphate + ADP + H(+). It participates in isoprenoid biosynthesis; isopentenyl diphosphate biosynthesis via DXP pathway; isopentenyl diphosphate from 1-deoxy-D-xylulose 5-phosphate: step 3/6. Functionally, catalyzes the phosphorylation of the position 2 hydroxy group of 4-diphosphocytidyl-2C-methyl-D-erythritol. The chain is 4-diphosphocytidyl-2-C-methyl-D-erythritol kinase from Caulobacter sp. (strain K31).